Here is a 686-residue protein sequence, read N- to C-terminus: Disintegrin and metalloproteinase domain-containing protein 17 homolog (686 aa).

The first 21 residues, 1–21, serve as a signal peptide directing secretion; that stretch reads MKIQDRSLLIFLVLGILKSDA. Residues 22 to 177 constitute a propeptide that is removed on maturation; the sequence is FNTRVKRHAP…RRAIAIPSDR (156 aa). N59, N206, and N262 each carry an N-linked (GlcNAc...) asparagine glycan. At 178–637 the chain is on the extracellular side; it reads RKDVLNVKRN…TGGVLEFIKT (460 aa). The 259-residue stretch at 187 to 445 folds into the Peptidase M12B domain; sequence NRCTLKLVAD…KWESCFQEEM (259 aa). 2 disulfide bridges follow: C328–C440 and C394–C424. Residue H370 participates in Zn(2+) binding. Residue E371 is part of the active site. The Zn(2+) site is built by H374 and H380. Residues 446–535 form the Disintegrin domain; that stretch reads TSFCGNGIVE…ECPSAPPVRD (90 aa). An N-linked (GlcNAc...) asparagine glycan is attached at N501. An intrachain disulfide couples C506 to C527. N-linked (GlcNAc...) asparagine glycosylation is present at N581. Residues 638 to 658 form a helical membrane-spanning segment; it reads HIVVIAIIFFTLIFVGIYKIV. Residues 659–686 are Cytoplasmic-facing; the sequence is KYGENFTEKVTHKTAGGCRSVFVKADVN.

Zn(2+) is required as a cofactor.

It localises to the cell membrane. Functionally, metalloprotease. Acts together with protease sup-17 to facilitate lin-12/Notch signaling during developmental cell fate decision, including anchor cell/ventral uterine precursor cell decision. By modulating glp-1/Notch signaling, plays a role in germline development. In Caenorhabditis elegans, this protein is Disintegrin and metalloproteinase domain-containing protein 17 homolog.